A 277-amino-acid chain; its full sequence is Large ribosomal subunit protein uL2 (277 aa).

Residues Gly-222–Asp-265 are disordered.

This sequence belongs to the universal ribosomal protein uL2 family. As to quaternary structure, part of the 50S ribosomal subunit. Forms a bridge to the 30S subunit in the 70S ribosome.

Its function is as follows. One of the primary rRNA binding proteins. Required for association of the 30S and 50S subunits to form the 70S ribosome, for tRNA binding and peptide bond formation. It has been suggested to have peptidyltransferase activity; this is somewhat controversial. Makes several contacts with the 16S rRNA in the 70S ribosome. This chain is Large ribosomal subunit protein uL2, found in Bradyrhizobium sp. (strain BTAi1 / ATCC BAA-1182).